We begin with the raw amino-acid sequence, 87 residues long: U15-lycotoxin-Ls1f (87 aa).

A signal peptide spans 1–20 (MNSKIFAVLLLLAFLSCVLS). The region spanning 21-66 (DQYCPKSSITACKKMNIRNDCCKDDDCTGGSWCCATPCGNFCKYPT) is the WAP domain. Intrachain disulfides connect C24–C54, C32–C58, C41–C53, C42–C80, and C47–C62.

The protein belongs to the venom protein 11 family. 01 (wap-1) subfamily. In terms of processing, contains 5 disulfide bonds. In terms of tissue distribution, expressed by the venom gland.

The protein resides in the secreted. Has antibacterial activity. In Lycosa singoriensis (Wolf spider), this protein is U15-lycotoxin-Ls1f.